The primary structure comprises 267 residues: 27 kDa primary mesenchyme-specific spicule protein (267 aa).

Residues 1 to 16 form the signal peptide; sequence MKLLAILLVLPALCFG. Positions 20-64 are 11 X 4 AA tandem repeats of G-[PQ]-G-[MQ]; that stretch reads EGPGMGPGMGPGMGPGMGPGMGPGMGPGMGPGMGPGQGQGQGQGQ. A run of 11 repeats spans residues 21–24, 25–28, 29–32, 33–36, 37–40, 41–44, 45–48, 49–52, 53–56, 57–60, and 61–64. Positions 44–68 are disordered; sequence MGPGMGPGMGPGQGQGQGQGQGQVG. The C-type lectin domain occupies 79-220; that stretch reads IGQQCFKMMS…CDEPMYFACS (142 aa). Intrachain disulfides connect Cys-100–Cys-219 and Cys-197–Cys-211.

In terms of tissue distribution, expressed specifically in the micromere/primary mesenchyme cells (PMC) lineage. Produced uniformly and exclusively by PMCs through the early prism stage and this specificity is further restricted during skeletogenesis to a subpopulation of PMCs associated with the growing tips of the spicules.

It is found in the secreted. In terms of biological role, may play a role in the regulation or execution of skeletal growth. This is 27 kDa primary mesenchyme-specific spicule protein (PM27) from Strongylocentrotus purpuratus (Purple sea urchin).